Consider the following 380-residue polypeptide: Actinidain (380 aa).

The first 24 residues, 1–24 (MGLPKSFVSMSLLFFSTLLILSLA), serve as a signal peptide directing secretion. Residues 25-126 (FNAKNLTQRT…NQYEPRVGQV (102 aa)) constitute a propeptide, activation peptide. 3 disulfide bridges follow: cysteine 148–cysteine 191, cysteine 182–cysteine 224, and cysteine 282–cysteine 332. Cysteine 151 is a catalytic residue. Cysteine 151 serves as a coordination point for E64. Active-site residues include histidine 288 and asparagine 308.

This sequence belongs to the peptidase C1 family. Fruit.

The catalysed reaction is Specificity close to that of papain.. Repressed by the active-site-directed cysteine protease inhibitor E64 (L-trans-epoxysuccinyl-leucylamide-(4-guanido)-butane) produced by Aspergillus japonicus. In terms of biological role, cysteine protease responsible for the cleavage of kiwellin into kissper and KiTH. In Actinidia chinensis var. chinensis (Chinese soft-hair kiwi), this protein is Actinidain.